The chain runs to 592 residues: Aspartate--tRNA ligase (592 aa).

Glu-171 provides a ligand contact to L-aspartate. Residues 195–198 (QLFK) are aspartate. Arg-217 contributes to the L-aspartate binding site. Residues 217–219 (RDE) and Gln-226 each bind ATP. An L-aspartate-binding site is contributed by His-448. Glu-482 provides a ligand contact to ATP. Arg-489 contacts L-aspartate. 534–537 (GLDR) is an ATP binding site.

It belongs to the class-II aminoacyl-tRNA synthetase family. Type 1 subfamily. Homodimer.

The protein localises to the cytoplasm. The enzyme catalyses tRNA(Asp) + L-aspartate + ATP = L-aspartyl-tRNA(Asp) + AMP + diphosphate. In terms of biological role, catalyzes the attachment of L-aspartate to tRNA(Asp) in a two-step reaction: L-aspartate is first activated by ATP to form Asp-AMP and then transferred to the acceptor end of tRNA(Asp). This chain is Aspartate--tRNA ligase, found in Vibrio parahaemolyticus serotype O3:K6 (strain RIMD 2210633).